The sequence spans 1433 residues: Probable serine/threonine-protein kinase DDB_G0277989 (1433 aa).

ATP is bound by residues 1 to 4 (MNEI) and Lys41. Residues 1–272 (MNEIIVGEYK…EFDDFTHPLS (272 aa)) enclose the Protein kinase 1 domain. Catalysis depends on Asp151, which acts as the Proton acceptor. Composition is skewed to low complexity over residues 332 to 362 (NNNN…NNNN) and 533 to 550 (TATT…TTTA). Disordered regions lie at residues 332–366 (NNNN…SDGP) and 521–550 (PSSE…TTTA). Positions 1177–1433 (IYDKRYYIQK…QPHVCKSFKK (257 aa)) constitute a Protein kinase 2 domain.

Belongs to the protein kinase superfamily. Ser/Thr protein kinase family.

It catalyses the reaction L-seryl-[protein] + ATP = O-phospho-L-seryl-[protein] + ADP + H(+). The catalysed reaction is L-threonyl-[protein] + ATP = O-phospho-L-threonyl-[protein] + ADP + H(+). This Dictyostelium discoideum (Social amoeba) protein is Probable serine/threonine-protein kinase DDB_G0277989.